The following is a 214-amino-acid chain: RNA pyrophosphohydrolase (214 aa).

A Nudix hydrolase domain is found at 6–149 (GFRPNVGIIL…KRDVYQLALT (144 aa)). The Nudix box motif lies at 38 to 59 (GGIKYGETPMQAMYRELHEETG).

Belongs to the Nudix hydrolase family. RppH subfamily. The cofactor is a divalent metal cation.

Accelerates the degradation of transcripts by removing pyrophosphate from the 5'-end of triphosphorylated RNA, leading to a more labile monophosphorylated state that can stimulate subsequent ribonuclease cleavage. This Burkholderia orbicola (strain MC0-3) protein is RNA pyrophosphohydrolase.